A 372-amino-acid chain; its full sequence is Biotin synthase (372 aa).

One can recognise a Radical SAM core domain in the interval cysteine 73–arginine 308. Residues cysteine 91, cysteine 95, and cysteine 98 each contribute to the [4Fe-4S] cluster site. The [2Fe-2S] cluster site is built by cysteine 136, cysteine 173, cysteine 233, and arginine 303.

The protein belongs to the radical SAM superfamily. Biotin synthase family. Homodimer. [4Fe-4S] cluster serves as cofactor. Requires [2Fe-2S] cluster as cofactor.

It carries out the reaction (4R,5S)-dethiobiotin + (sulfur carrier)-SH + 2 reduced [2Fe-2S]-[ferredoxin] + 2 S-adenosyl-L-methionine = (sulfur carrier)-H + biotin + 2 5'-deoxyadenosine + 2 L-methionine + 2 oxidized [2Fe-2S]-[ferredoxin]. The protein operates within cofactor biosynthesis; biotin biosynthesis; biotin from 7,8-diaminononanoate: step 2/2. Its function is as follows. Catalyzes the conversion of dethiobiotin (DTB) to biotin by the insertion of a sulfur atom into dethiobiotin via a radical-based mechanism. In Cyanothece sp. (strain PCC 7425 / ATCC 29141), this protein is Biotin synthase.